Here is a 208-residue protein sequence, read N- to C-terminus: AN1-type zinc finger protein 6 (208 aa).

The A20-type zinc-finger motif lies at 8–42 (SQVPMLCSTGCGFYGNPRTNGMCSVCYKEHLQRQN). 4 residues coordinate Zn(2+): cysteine 14, cysteine 18, cysteine 30, and cysteine 33. Polar residues predominate over residues 41-68 (QNSSNGRISPPATSVSSLSESLPVQCTD). Residues 41–140 (QNSSNGRISP…PSEEQSKSLE (100 aa)) are disordered. Serine 49 carries the post-translational modification Phosphoserine. Residues 75 to 94 (QSTLDSTSSSMQPSPVSNQS) are compositionally biased toward low complexity. 2 stretches are compositionally biased toward polar residues: residues 95 to 110 (LLSE…STSV) and 120 to 133 (LQAS…QPSE). The AN1-type zinc finger occupies 143 to 189 (KQKKNRCFMCRKKVGLTGFECRCGNVYCGVHRYSDVHNCSYNYKADA). Cysteine 149, cysteine 152, cysteine 163, cysteine 165, cysteine 170, histidine 173, histidine 179, and cysteine 181 together coordinate Zn(2+). Residue lysine 204 is modified to N6-acetyllysine.

Interacts with PKN1. Interacts with TRAF2. Interacts with mono- and polyubiquitin. Interacts with PEX6. Interacts with PEX5 (Cys-linked ubiquitinated).

The protein resides in the cytoplasm. In terms of biological role, involved in regulation of TNF-alpha induced NF-kappa-B activation and apoptosis. Involved in modulation of 'Lys-48'-linked polyubiquitination status of TRAF2 and decreases association of TRAF2 with RIPK1. Required for PTS1 target sequence-dependent protein import into peroxisomes and PEX5 stability; may cooperate with PEX6. In vitro involved in PEX5 export from the cytosol to peroxisomes. The sequence is that of AN1-type zinc finger protein 6 (ZFAND6) from Pongo abelii (Sumatran orangutan).